The sequence spans 318 residues: NAC domain-containing protein 68 (318 aa).

Residues 21-175 (LPPGFRFHPT…EWVLCRLYNK (155 aa)) form the NAC domain.

In terms of tissue distribution, expressed in stems, leaf blades and callus. Weakly expressed in developing flowers.

It is found in the nucleus. Its function is as follows. Probable transcription factor involved in stress response. This is NAC domain-containing protein 68 from Oryza sativa subsp. japonica (Rice).